A 376-amino-acid polypeptide reads, in one-letter code: uncharacterized protein (376 aa).

An N-terminal signal peptide occupies residues 1 to 22 (MVATGRIIITLLAAALDEIILA).

It belongs to the ascovirus HvAV ORF17 family.

This is an uncharacterized protein from Heliothis virescens ascovirus 3e (HvAV-3e).